Consider the following 183-residue polypeptide: Acireductone dioxygenase (183 aa).

4 residues coordinate Fe(2+): His99, His101, Glu105, and His144. Residues His99, His101, Glu105, and His144 each coordinate Ni(2+).

It belongs to the acireductone dioxygenase (ARD) family. In terms of assembly, monomer. Fe(2+) is required as a cofactor. Requires Ni(2+) as cofactor.

The enzyme catalyses 1,2-dihydroxy-5-(methylsulfanyl)pent-1-en-3-one + O2 = 3-(methylsulfanyl)propanoate + CO + formate + 2 H(+). It carries out the reaction 1,2-dihydroxy-5-(methylsulfanyl)pent-1-en-3-one + O2 = 4-methylsulfanyl-2-oxobutanoate + formate + 2 H(+). The protein operates within amino-acid biosynthesis; L-methionine biosynthesis via salvage pathway; L-methionine from S-methyl-5-thio-alpha-D-ribose 1-phosphate: step 5/6. Catalyzes 2 different reactions between oxygen and the acireductone 1,2-dihydroxy-3-keto-5-methylthiopentene (DHK-MTPene) depending upon the metal bound in the active site. Fe-containing acireductone dioxygenase (Fe-ARD) produces formate and 2-keto-4-methylthiobutyrate (KMTB), the alpha-ketoacid precursor of methionine in the methionine recycle pathway. Ni-containing acireductone dioxygenase (Ni-ARD) produces methylthiopropionate, carbon monoxide and formate, and does not lie on the methionine recycle pathway. The chain is Acireductone dioxygenase from Microcystis aeruginosa.